We begin with the raw amino-acid sequence, 247 residues long: Probable transcriptional regulatory protein Swit_2142 (247 aa).

Residues 1–14 (MAGHSKFKNIMHRK) show a composition bias toward basic residues. Residues 1–21 (MAGHSKFKNIMHRKGAQDKKR) are disordered.

This sequence belongs to the TACO1 family.

It is found in the cytoplasm. The sequence is that of Probable transcriptional regulatory protein Swit_2142 from Rhizorhabdus wittichii (strain DSM 6014 / CCUG 31198 / JCM 15750 / NBRC 105917 / EY 4224 / RW1) (Sphingomonas wittichii).